A 485-amino-acid chain; its full sequence is UDP-N-acetylmuramoyl-L-alanyl-D-glutamate--2,6-diaminopimelate ligase (485 aa).

Serine 28 is a UDP-N-acetyl-alpha-D-muramoyl-L-alanyl-D-glutamate binding site. 108 to 114 (GTNGKTS) contributes to the ATP binding site. UDP-N-acetyl-alpha-D-muramoyl-L-alanyl-D-glutamate is bound by residues asparagine 147, 148–149 (TT), serine 175, and arginine 183. Lysine 215 carries the N6-carboxylysine modification. Meso-2,6-diaminopimelate contacts are provided by residues arginine 374, 398–401 (DNPR), glycine 449, and glutamate 453. The Meso-diaminopimelate recognition motif signature appears at 398–401 (DNPR).

This sequence belongs to the MurCDEF family. MurE subfamily. Mg(2+) is required as a cofactor. Carboxylation is probably crucial for Mg(2+) binding and, consequently, for the gamma-phosphate positioning of ATP.

The protein resides in the cytoplasm. It catalyses the reaction UDP-N-acetyl-alpha-D-muramoyl-L-alanyl-D-glutamate + meso-2,6-diaminopimelate + ATP = UDP-N-acetyl-alpha-D-muramoyl-L-alanyl-gamma-D-glutamyl-meso-2,6-diaminopimelate + ADP + phosphate + H(+). The protein operates within cell wall biogenesis; peptidoglycan biosynthesis. In terms of biological role, catalyzes the addition of meso-diaminopimelic acid to the nucleotide precursor UDP-N-acetylmuramoyl-L-alanyl-D-glutamate (UMAG) in the biosynthesis of bacterial cell-wall peptidoglycan. This is UDP-N-acetylmuramoyl-L-alanyl-D-glutamate--2,6-diaminopimelate ligase from Fusobacterium nucleatum subsp. nucleatum (strain ATCC 25586 / DSM 15643 / BCRC 10681 / CIP 101130 / JCM 8532 / KCTC 2640 / LMG 13131 / VPI 4355).